The chain runs to 291 residues: S-methyl-5'-thioadenosine phosphorylase (291 aa).

Residues serine 12, 54–55 (RH), and 87–88 (SA) contribute to the phosphate site. Methionine 185 is a binding site for substrate. Threonine 186 provides a ligand contact to phosphate. 209-211 (DFD) is a binding site for substrate.

The protein belongs to the PNP/MTAP phosphorylase family. MTAP subfamily. As to quaternary structure, homohexamer. Dimer of a homotrimer.

It catalyses the reaction S-methyl-5'-thioadenosine + phosphate = 5-(methylsulfanyl)-alpha-D-ribose 1-phosphate + adenine. The protein operates within amino-acid biosynthesis; L-methionine biosynthesis via salvage pathway; S-methyl-5-thio-alpha-D-ribose 1-phosphate from S-methyl-5'-thioadenosine (phosphorylase route): step 1/1. Functionally, catalyzes the reversible phosphorylation of S-methyl-5'-thioadenosine (MTA) to adenine and 5-methylthioribose-1-phosphate. Involved in the breakdown of MTA, a major by-product of polyamine biosynthesis. Responsible for the first step in the methionine salvage pathway after MTA has been generated from S-adenosylmethionine. Has broad substrate specificity with 6-aminopurine nucleosides as preferred substrates. The polypeptide is S-methyl-5'-thioadenosine phosphorylase (Bradyrhizobium diazoefficiens (strain JCM 10833 / BCRC 13528 / IAM 13628 / NBRC 14792 / USDA 110)).